The sequence spans 480 residues: M-phase inducer phosphatase cdc-25.2 (480 aa).

The segment covering 1–20 (MNRPSQISQDVAQPLSNQHE) has biased composition (polar residues). The segment at 1-35 (MNRPSQISQDVAQPLSNQHETAMMSSDEDSMSRDS) is disordered. In terms of domain architecture, Rhodanese spans 243 to 349 (FDDKYILIDC…FFFAANEANI (107 aa)). Positions 411–452 (TSAPSTSTENIDTNDDCQKSRTPAVPRIASRRNLFSDPSHSP) are disordered.

The protein belongs to the MPI phosphatase family.

The enzyme catalyses O-phospho-L-tyrosyl-[protein] + H2O = L-tyrosyl-[protein] + phosphate. Required for intestinal cell division following the 16E cell stage of embryogenesis. Regulates intestinal cell divisions and binucleations probably by modulating the activity of the cell cycle regulator wee-1.3 and by activating the cdk-1/cyb-1 complex. Plays a role in male tail development, via regulation of the cell divisions of the ray precursor cell lineages, perhaps acting together with cell cycle regulators cyl-1, cdk-1, cyb-3, and cyd-1. The polypeptide is M-phase inducer phosphatase cdc-25.2 (Caenorhabditis elegans).